Here is an 88-residue protein sequence, read N- to C-terminus: Small ribosomal subunit protein bS20 (88 aa).

Belongs to the bacterial ribosomal protein bS20 family.

Binds directly to 16S ribosomal RNA. This Clostridium acetobutylicum (strain ATCC 824 / DSM 792 / JCM 1419 / IAM 19013 / LMG 5710 / NBRC 13948 / NRRL B-527 / VKM B-1787 / 2291 / W) protein is Small ribosomal subunit protein bS20.